Reading from the N-terminus, the 545-residue chain is Pseudouridylate synthase RPUSD2 (545 aa).

Residues 48 to 121 (GLRASHQQNG…PPPKKRRTGV (74 aa)) form a disordered region. Ser-68 carries the post-translational modification Phosphoserine. Asp-274 is a catalytic residue. The residue at position 477 (Thr-477) is a Phosphothreonine.

The protein belongs to the pseudouridine synthase RluA family.

It carries out the reaction a uridine in mRNA = a pseudouridine in mRNA. In terms of biological role, pseudouridine synthase that catalyzes pseudouridylation of mRNAs. This chain is Pseudouridylate synthase RPUSD2, found in Homo sapiens (Human).